Consider the following 235-residue polypeptide: Large ribosomal subunit protein uL1 (235 aa).

It belongs to the universal ribosomal protein uL1 family. In terms of assembly, part of the 50S ribosomal subunit.

Binds directly to 23S rRNA. The L1 stalk is quite mobile in the ribosome, and is involved in E site tRNA release. Its function is as follows. Protein L1 is also a translational repressor protein, it controls the translation of the L11 operon by binding to its mRNA. This Prochlorococcus marinus (strain AS9601) protein is Large ribosomal subunit protein uL1.